Here is a 279-residue protein sequence, read N- to C-terminus: Thymidylate synthase (279 aa).

Position 133–134 (133–134 (RR)) interacts with dUMP. Residue Cys154 is the Nucleophile of the active site. DUMP contacts are provided by residues 178-181 (RSND), Asn189, and 219-221 (HIY). Asp181 serves as a coordination point for (6R)-5,10-methylene-5,6,7,8-tetrahydrofolate. Residue Ala278 participates in (6R)-5,10-methylene-5,6,7,8-tetrahydrofolate binding.

This sequence belongs to the thymidylate synthase family. Bacterial-type ThyA subfamily. As to quaternary structure, homodimer.

It localises to the cytoplasm. The catalysed reaction is dUMP + (6R)-5,10-methylene-5,6,7,8-tetrahydrofolate = 7,8-dihydrofolate + dTMP. It participates in pyrimidine metabolism; dTTP biosynthesis. Functionally, catalyzes the reductive methylation of 2'-deoxyuridine-5'-monophosphate (dUMP) to 2'-deoxythymidine-5'-monophosphate (dTMP) while utilizing 5,10-methylenetetrahydrofolate (mTHF) as the methyl donor and reductant in the reaction, yielding dihydrofolate (DHF) as a by-product. This enzymatic reaction provides an intracellular de novo source of dTMP, an essential precursor for DNA biosynthesis. This is Thymidylate synthase from Streptococcus pneumoniae (strain 70585).